We begin with the raw amino-acid sequence, 554 residues long: Carboxypeptidase Y homolog A (554 aa).

The first 17 residues, 1-17, serve as a signal peptide directing secretion; it reads MRIAASTVLFGAASAAS. A propeptide spanning residues 18–137 is cleaved from the precursor; the sequence is FQQQAQHVLS…RLEEYNLRVK (120 aa). 5 disulfides stabilise this stretch: Cys-191–Cys-431, Cys-325–Cys-339, Cys-349–Cys-372, Cys-356–Cys-365, and Cys-394–Cys-401. Residue Asn-222 is glycosylated (N-linked (GlcNAc...) asparagine). Ser-278 is an active-site residue. The active site involves Asp-470. Asn-518 is a glycosylation site (N-linked (GlcNAc...) asparagine). Residue His-529 is part of the active site.

Belongs to the peptidase S10 family.

It localises to the vacuole. It catalyses the reaction Release of a C-terminal amino acid with broad specificity.. Vacuolar carboxypeptidase involved in degradation of small peptides. Digests preferentially peptides containing an aliphatic or hydrophobic residue in P1' position, as well as methionine, leucine or phenylalanine in P1 position of ester substrate. The polypeptide is Carboxypeptidase Y homolog A (CPYA) (Chaetomium globosum (strain ATCC 6205 / CBS 148.51 / DSM 1962 / NBRC 6347 / NRRL 1970) (Soil fungus)).